The primary structure comprises 669 residues: Zinc finger CCCH domain-containing protein 17 (669 aa).

The segment covering 1 to 11 has biased composition (low complexity); it reads MFAPATQPQQQ. Residues 1–23 are disordered; it reads MFAPATQPQQQHEQKKQSETVSS. C3H1-type zinc fingers lie at residues 34–58, 60–86, and 114–141; these read DCVY…HSEY, RMNP…HPPL, and AKQP…HTPN. Disordered regions lie at residues 150–175, 285–306, 376–589, and 642–669; these read PVEA…EKKL, VEDR…PDFS, GMRL…VMEE, and EEGE…EMLS. Basic and acidic residues-rich tracts occupy residues 164–175, 285–299, 392–406, 420–464, 478–499, and 547–579; these read KPIENNTEEKKL, VEDR…RGNS, SMDR…DTPR, KLRE…EENH, RRRE…ESKP, and NNKD…PKAE. Composition is skewed to acidic residues over residues 580-589 and 642-659; these read VEEEGTVMEE and EEGE…GEED. Residues 660–669 show a composition bias toward basic and acidic residues; it reads IEKKTVEMLS.

The sequence is that of Zinc finger CCCH domain-containing protein 17 from Arabidopsis thaliana (Mouse-ear cress).